The primary structure comprises 516 residues: Nucleolar complex protein 4 homolog (516 aa).

Transmembrane regions (helical) follow at residues 296 to 316, 347 to 367, and 375 to 395; these read SACD…FILI, FFHL…LVAA, and LALT…CNLL.

Belongs to the CBF/MAK21 family.

Its subcellular location is the nucleus membrane. It is found in the nucleus. The protein resides in the nucleolus. This chain is Nucleolar complex protein 4 homolog (Noc4l), found in Mus musculus (Mouse).